Reading from the N-terminus, the 375-residue chain is Cyclic AMP receptor 2 (375 aa).

The Extracellular portion of the chain corresponds to 1 to 10 (MTIMSDIIAQ). A helical membrane pass occupies residues 11–30 (RTILLIADFSSIIGCSLVLI). Over 31–44 (GFWRLKLLRNHITK) the chain is Cytoplasmic. Residues 45 to 65 (IISLFCATSLFKDVISTIITL) traverse the membrane as a helical segment. Residues 66–82 (LYKPDQTESGFPCYLHA) are Extracellular-facing. A helical membrane pass occupies residues 83–108 (IVITFGSLACWLWTLMLSFSIYNLIV). The Cytoplasmic portion of the chain corresponds to 109-119 (RREPEPERFEK). A helical membrane pass occupies residues 120 to 138 (FYFCLCYGLPLISTIVMLS). Over 139–161 (THIIQPVGGWCWIGDNYDGYRFG) the chain is Extracellular. The chain crosses the membrane as a helical span at residues 162–180 (LFYGPFFFIWGTSAILVGL). Topologically, residues 181–204 (TSKYTYSVIRSSVSDNKDKHMTYQ) are cytoplasmic. Phosphoserine is present on Ser-192. Residues 205 to 223 (FKLINYIVVFLVCWVFAIV) form a helical membrane-spanning segment. The Extracellular segment spans residues 224–234 (NRILNGLNQFP). Residues 235-259 (TVPNVLHTYFSVSHGFYASITFIYN) form a helical membrane-spanning segment. At 260-375 (NPLMWRYFGA…NNINNKNDMI (116 aa)) the chain is on the cytoplasmic side. A phosphoserine mark is found at Ser-298 and Ser-303. The interval 338–375 (PKENENQNHHHHHHHHHHHNHYNNNNNNNNINNKNDMI) is disordered. Residues 346-358 (HHHHHHHHHHHNH) are compositionally biased toward basic residues. The segment covering 359–375 (YNNNNNNNNINNKNDMI) has biased composition (low complexity).

It belongs to the G-protein coupled receptor 5 family. In terms of processing, C-terminal Ser or Thr residues may be phosphorylated.

Its subcellular location is the membrane. Receptor for cAMP. Coordinates the aggregation of individual cells into a multicellular organism and regulates the expression of a large number of developmentally regulated genes. The activity of this receptor is mediated by G proteins. Plays a key role during tip formation and late development; involved in cAMP-directed patterning of pre stalk cells as they sort before and during tip formation. The polypeptide is Cyclic AMP receptor 2 (carB) (Dictyostelium discoideum (Social amoeba)).